The following is a 194-amino-acid chain: HTH-type transcriptional regulator BetI (194 aa).

The HTH tetR-type domain occupies 8-68; that stretch reads EIRRAQLIDA…ATMRHVLRDL (61 aa). Positions 31–50 form a DNA-binding region, H-T-H motif; it reads TLASVAQRANISTGIVSHYF.

Its pathway is amine and polyamine biosynthesis; betaine biosynthesis via choline pathway [regulation]. In terms of biological role, repressor involved in the biosynthesis of the osmoprotectant glycine betaine. It represses transcription of the choline transporter BetT and the genes of BetAB involved in the synthesis of glycine betaine. The sequence is that of HTH-type transcriptional regulator BetI from Burkholderia cenocepacia (strain ATCC BAA-245 / DSM 16553 / LMG 16656 / NCTC 13227 / J2315 / CF5610) (Burkholderia cepacia (strain J2315)).